We begin with the raw amino-acid sequence, 80 residues long: Mitotic-spindle organizing protein 1 (80 aa).

Belongs to the MOZART1 family. Part of the gamma-tubulin complex.

The protein localises to the cytoplasm. It localises to the cytoskeleton. The protein resides in the microtubule organizing center. It is found in the spindle pole body. Its function is as follows. Required for gamma-tubulin complex recruitment to the microtubule organizing center (MTOC). The chain is Mitotic-spindle organizing protein 1 from Pyricularia oryzae (strain 70-15 / ATCC MYA-4617 / FGSC 8958) (Rice blast fungus).